Here is a 204-residue protein sequence, read N- to C-terminus: Pyrrolidone-carboxylate peptidase (204 aa).

Active-site residues include Glu78, Cys141, and His165.

This sequence belongs to the peptidase C15 family. As to quaternary structure, homotetramer.

The protein resides in the cytoplasm. The enzyme catalyses Release of an N-terminal pyroglutamyl group from a polypeptide, the second amino acid generally not being Pro.. In terms of biological role, removes 5-oxoproline from various penultimate amino acid residues except L-proline. This chain is Pyrrolidone-carboxylate peptidase, found in Levilactobacillus brevis (strain ATCC 367 / BCRC 12310 / CIP 105137 / JCM 1170 / LMG 11437 / NCIMB 947 / NCTC 947) (Lactobacillus brevis).